A 1450-amino-acid polypeptide reads, in one-letter code: Protein clueless (1450 aa).

Disordered regions lie at residues 1–126 (MALE…PGSE) and 266–287 (KTRP…VSEP). Low complexity predominate over residues 29–60 (NNSSAGKKQQQQQQPNQNQNLVNGNGNAADGP). Residues 62–71 (AKKKGKKNRN) are compositionally biased toward basic residues. S271 is modified (phosphoserine). Residues 425 to 667 (RAEDAFSSKL…RTFPPDVNFL (243 aa)) form the Clu domain. 2 stretches are compositionally biased toward basic and acidic residues: residues 725–734 (KQSEKTEEKA) and 743–765 (KESS…EEKQ). 2 disordered regions span residues 725–775 (KQSE…TKTA) and 959–1011 (PAVS…SDWT). Basic residues predominate over residues 968–983 (KKRSNGNKHNKHKSKG). The span at 984 to 1008 (NKQQASGNQNGSSAGSSSGGSSSSS) shows a compositional bias: low complexity. 3 TPR repeats span residues 1102–1135 (AYNF…LNNV), 1228–1261 (ALID…NIKY), and 1263–1296 (GSKA…EKET). Residues 1410-1450 (NNNGDTEAETKDATKDNKDLAGASTQLTNGDKDAETAVASS) form a disordered region. The segment covering 1417 to 1428 (AETKDATKDNKD) has biased composition (basic and acidic residues).

It belongs to the CLU family.

Its subcellular location is the cytoplasm. Its function is as follows. mRNA-binding protein involved in proper cytoplasmic distribution of mitochondria. This is Protein clueless from Drosophila ananassae (Fruit fly).